Reading from the N-terminus, the 75-residue chain is Small ribosomal subunit protein bS18 (75 aa).

This sequence belongs to the bacterial ribosomal protein bS18 family. As to quaternary structure, part of the 30S ribosomal subunit. Forms a tight heterodimer with protein bS6.

In terms of biological role, binds as a heterodimer with protein bS6 to the central domain of the 16S rRNA, where it helps stabilize the platform of the 30S subunit. This is Small ribosomal subunit protein bS18 from Paracoccus denitrificans (strain Pd 1222).